The following is a 635-amino-acid chain: tRNA uridine 5-carboxymethylaminomethyl modification enzyme MnmG (635 aa).

19–24 (GAGHAG) contacts FAD. 280–294 (GPRYCPSIEDKIVRF) is an NAD(+) binding site.

The protein belongs to the MnmG family. As to quaternary structure, homodimer. Heterotetramer of two MnmE and two MnmG subunits. It depends on FAD as a cofactor.

It is found in the cytoplasm. Functionally, NAD-binding protein involved in the addition of a carboxymethylaminomethyl (cmnm) group at the wobble position (U34) of certain tRNAs, forming tRNA-cmnm(5)s(2)U34. This chain is tRNA uridine 5-carboxymethylaminomethyl modification enzyme MnmG, found in Synechocystis sp. (strain ATCC 27184 / PCC 6803 / Kazusa).